The primary structure comprises 147 residues: Large ribosomal subunit protein uL22c (147 aa).

Belongs to the universal ribosomal protein uL22 family. In terms of assembly, part of the 50S ribosomal subunit.

Its subcellular location is the plastid. It is found in the chloroplast. In terms of biological role, this protein binds specifically to 23S rRNA. Functionally, the globular domain of the protein is located near the polypeptide exit tunnel on the outside of the subunit, while an extended beta-hairpin is found that lines the wall of the exit tunnel in the center of the 70S ribosome. This is Large ribosomal subunit protein uL22c (rpl22) from Lolium perenne (Perennial ryegrass).